Reading from the N-terminus, the 556-residue chain is Set1/Ash2 histone methyltransferase complex subunit ASH2 (556 aa).

Polar residues predominate over residues 1–19 (MEDSQMDTSSPTESSSEVN). Positions 1–27 (MEDSQMDTSSPTESSSEVNFTAEEDKS) are disordered. Residues 34–90 (AGVCYCGKERNLNIVELLCATCSRWVHETCVSYQLGKGKLLPFITNYVFVCKNCSAS) form a PHD-type zinc finger. The Zn(2+) site is built by Cys37, Cys39, Cys52, Cys55, His60, Cys63, Cys84, and Cys87. Residues 216–251 (ASLSKNNRQKRKFPGTDSGPTGKKGRPSSDITANVK) form a disordered region. The 223-residue stretch at 288–510 (SSDWAGKPIP…VSVNFGPAFK (223 aa)) folds into the B30.2/SPRY domain.

As to quaternary structure, core component of several methyltransferase-containing complexes. Component of the SET1C/COMPASS complex, composed at least of the catalytic subunit Set1, wds/WDR5, Wdr82, Rbbp5, ash2, Cfp1/CXXC1, hcf and Dpy-30L1. Component of the MLL3/4 (Histone-lysine N-methyltransferase/demethylase TRR) complex composed at least of the catalytic subunit trr, ash2, Rbbp5, Dpy-30L1, wds, hcf, ptip, Pa1, Utx, Lpt and Ncoa6. Interacts with hcf. Interacts with trr. In terms of assembly, interacts (via B30.2/SPRY domain) with sktl; the interaction is direct. As to expression, in larvae and pupae, expressed in imaginal disks, salivary gland and fat body cells. No expression detected in central nervous system (at protein level).

Its subcellular location is the nucleus. It is found in the chromosome. Transcriptional regulator. Regulates a number of genes involved in wing development including activation of net and bs and repression of rho and kni and controls vein-intervein patterning during wing development. Required for correct expression of a number of homeotic genes including Scr in the first leg imaginal disk and Ubx in the third leg imaginal disk and haltere disks. Required for stabilization of the histone-lysine N-methyltransferase trr and for trimethylation of 'Lys-4' of histone H3. Together with sktl probably plays a role in maintenance of transcriptionally active chromatin through down-regulation of histone H1 hyperphosphorylation. The sequence is that of Set1/Ash2 histone methyltransferase complex subunit ASH2 from Drosophila melanogaster (Fruit fly).